The sequence spans 122 residues: Large ribosomal subunit protein bL19c (122 aa).

Belongs to the bacterial ribosomal protein bL19 family.

It localises to the plastid. The protein resides in the chloroplast. The polypeptide is Large ribosomal subunit protein bL19c (rpl19) (Rhodomonas salina (Cryptomonas salina)).